Consider the following 135-residue polypeptide: CDGSH iron-sulfur domain-containing protein 2B (135 aa).

Residues 1-37 (MVLETISKIIKTQLPAYLKKFPLPETIGGFARLTVLD) are Lumenal-facing. Residues 38–60 (WLRLLPLLGILALLGYLTIRPFL) traverse the membrane as a helical segment. Over 61 to 135 (PKKKKQKDSL…GPLILKKKIL (75 aa)) the chain is Cytoplasmic. Residues Cys-99, Cys-101, Cys-110, and His-114 each contribute to the [2Fe-2S] cluster site.

Belongs to the CISD protein family. CISD2 subfamily. Homodimer. [2Fe-2S] cluster serves as cofactor.

It is found in the endoplasmic reticulum membrane. It localises to the mitochondrion outer membrane. Its function is as follows. Regulator of autophagy that contributes to antagonize becn1-mediated cellular autophagy at the endoplasmic reticulum. Participates in the interaction of bcl2 with becn1 and is required for bcl2-mediated depression of endoplasmic reticulum Ca(2+) stores during autophagy. In Salmo salar (Atlantic salmon), this protein is CDGSH iron-sulfur domain-containing protein 2B (cisd2b).